The sequence spans 402 residues: 4-hydroxy-3-methylbut-2-enyl diphosphate reductase (402 aa).

Cys-66 is a [4Fe-4S] cluster binding site. His-96 contributes to the (2E)-4-hydroxy-3-methylbut-2-enyl diphosphate binding site. A dimethylallyl diphosphate-binding site is contributed by His-96. His-96 is an isopentenyl diphosphate binding site. Position 157 (Cys-157) interacts with [4Fe-4S] cluster. Position 185 (His-185) interacts with (2E)-4-hydroxy-3-methylbut-2-enyl diphosphate. His-185 is a dimethylallyl diphosphate binding site. Residue His-185 coordinates isopentenyl diphosphate. Glu-187 (proton donor) is an active-site residue. Residue Thr-250 participates in (2E)-4-hydroxy-3-methylbut-2-enyl diphosphate binding. Residue Cys-288 participates in [4Fe-4S] cluster binding. 4 residues coordinate (2E)-4-hydroxy-3-methylbut-2-enyl diphosphate: Ser-317, Ser-318, Asn-319, and Ser-379. Dimethylallyl diphosphate contacts are provided by Ser-317, Ser-318, Asn-319, and Ser-379. Isopentenyl diphosphate-binding residues include Ser-317, Ser-318, Asn-319, and Ser-379.

It belongs to the IspH family. [4Fe-4S] cluster serves as cofactor.

The enzyme catalyses isopentenyl diphosphate + 2 oxidized [2Fe-2S]-[ferredoxin] + H2O = (2E)-4-hydroxy-3-methylbut-2-enyl diphosphate + 2 reduced [2Fe-2S]-[ferredoxin] + 2 H(+). It catalyses the reaction dimethylallyl diphosphate + 2 oxidized [2Fe-2S]-[ferredoxin] + H2O = (2E)-4-hydroxy-3-methylbut-2-enyl diphosphate + 2 reduced [2Fe-2S]-[ferredoxin] + 2 H(+). It functions in the pathway isoprenoid biosynthesis; dimethylallyl diphosphate biosynthesis; dimethylallyl diphosphate from (2E)-4-hydroxy-3-methylbutenyl diphosphate: step 1/1. It participates in isoprenoid biosynthesis; isopentenyl diphosphate biosynthesis via DXP pathway; isopentenyl diphosphate from 1-deoxy-D-xylulose 5-phosphate: step 6/6. Functionally, catalyzes the conversion of 1-hydroxy-2-methyl-2-(E)-butenyl 4-diphosphate (HMBPP) into a mixture of isopentenyl diphosphate (IPP) and dimethylallyl diphosphate (DMAPP). Acts in the terminal step of the DOXP/MEP pathway for isoprenoid precursor biosynthesis. This is 4-hydroxy-3-methylbut-2-enyl diphosphate reductase from Microcystis aeruginosa (strain NIES-843 / IAM M-2473).